The sequence spans 149 residues: Myosin light chain 1 (149 aa).

EF-hand domains are found at residues Ser-2–Asn-37, Ala-81–Lys-116, and Leu-117–Gln-149. Ca(2+) is bound by residues Asp-15, Asp-94, Thr-98, Lys-100, and Asp-105. Residue Lys-116 forms a Glycyl lysine isopeptide (Lys-Gly) (interchain with G-Cter in ubiquitin) linkage. Residues Asp-123, Lys-127, and Asp-132 each contribute to the Ca(2+) site.

Interacts with MYO1, MYO2 and IQG1 by binding to their IQ domains. Interacts with SEC4.

It is found in the bud neck. Its subcellular location is the bud tip. In terms of biological role, essential light chain for the class II conventional myosin MYO1. Also acts as light chain for the class V unconventional myosin MYO2 and for IQG1. Involved in the assembly of the contractile actomyosin ring at the bud neck during cytokinesis by recruiting IQG1 to the bud neck. Also required for chitin and MYO2-dependent secretory vesicle deposition to the center of the bud neck for septum formation. May stabilize MYO2 by binding to its IQ domains. Its major function is probably not to regulate MYO1 activity, but rather to coordinate actin ring formation and targeted membrane deposition during cytokinesis via its interactions with MYO1, IQG1 and MYO2. In Saccharomyces cerevisiae (strain ATCC 204508 / S288c) (Baker's yeast), this protein is Myosin light chain 1 (MLC1).